Consider the following 312-residue polypeptide: Aspartate carbamoyltransferase catalytic subunit (312 aa).

Residues Arg58 and Thr59 each contribute to the carbamoyl phosphate site. Lys86 serves as a coordination point for L-aspartate. Residues Arg108, His136, and Gln139 each contribute to the carbamoyl phosphate site. The L-aspartate site is built by Arg169 and Arg223. Carbamoyl phosphate-binding residues include Gly264 and Pro265.

Belongs to the aspartate/ornithine carbamoyltransferase superfamily. ATCase family. As to quaternary structure, heterododecamer (2C3:3R2) of six catalytic PyrB chains organized as two trimers (C3), and six regulatory PyrI chains organized as three dimers (R2).

It catalyses the reaction carbamoyl phosphate + L-aspartate = N-carbamoyl-L-aspartate + phosphate + H(+). It participates in pyrimidine metabolism; UMP biosynthesis via de novo pathway; (S)-dihydroorotate from bicarbonate: step 2/3. Functionally, catalyzes the condensation of carbamoyl phosphate and aspartate to form carbamoyl aspartate and inorganic phosphate, the committed step in the de novo pyrimidine nucleotide biosynthesis pathway. This chain is Aspartate carbamoyltransferase catalytic subunit, found in Endomicrobium trichonymphae.